The sequence spans 413 residues: Clusterin-associated protein 1 (413 aa).

Positions 198 to 291 form a coiled coil; the sequence is KTKDLLNNVA…ERFEEAKNTL (94 aa). The tract at residues 305-413 is disordered; that stretch reads LLKSGSNDDS…EPLDESDNDF (109 aa). 2 stretches are compositionally biased toward acidic residues: residues 312–328 and 360–388; these read DDSD…DSEL and DSDD…EDES. 3 positions are modified to phosphoserine: Ser-314, Ser-324, and Ser-326. Position 409 is a phosphoserine (Ser-409).

Belongs to the CLUAP1 family. Interacts with CLU/clusterin. Interacts with UBXN10; the interaction is direct. As to expression, expressed in testis, thyroid and trachea and to a lower extent in spinal cord and adrenal gland. Highly expressed in colon cancer and osteosarcoma cell lines.

The protein resides in the cell projection. Its subcellular location is the cilium. The protein localises to the nucleus. Its function is as follows. Required for cilia biogenesis. Appears to function within the multiple intraflagellar transport complex B (IFT-B). Key regulator of hedgehog signaling. This is Clusterin-associated protein 1 (CLUAP1) from Homo sapiens (Human).